A 350-amino-acid chain; its full sequence is Ferredoxin--NADP reductase (350 aa).

Positions 22, 41, 49, 54, 94, 129, 295, and 336 each coordinate FAD.

This sequence belongs to the ferredoxin--NADP reductase type 2 family. Homodimer. Requires FAD as cofactor.

The enzyme catalyses 2 reduced [2Fe-2S]-[ferredoxin] + NADP(+) + H(+) = 2 oxidized [2Fe-2S]-[ferredoxin] + NADPH. The chain is Ferredoxin--NADP reductase from Chlorobium luteolum (strain DSM 273 / BCRC 81028 / 2530) (Pelodictyon luteolum).